The following is a 266-amino-acid chain: Small ribosomal subunit protein eS1 (266 aa).

The tract at residues 233-266 is disordered; that stretch reads GEGGGSSAAKPSGDDTGAKVDRADGYEPPIQETV. Residues 244-257 are compositionally biased toward basic and acidic residues; the sequence is SGDDTGAKVDRADG.

This sequence belongs to the eukaryotic ribosomal protein eS1 family. Component of the small ribosomal subunit. Mature ribosomes consist of a small (40S) and a large (60S) subunit. The 40S subunit contains about 33 different proteins and 1 molecule of RNA (18S). The 60S subunit contains about 49 different proteins and 3 molecules of RNA (28S, 5.8S and 5S). Part of the small subunit (SSU) processome, composed of more than 70 proteins and the RNA chaperone small nucleolar RNA (snoRNA) U3.

Its subcellular location is the cytoplasm. It is found in the nucleus. The protein localises to the nucleolus. Its function is as follows. Component of the small ribosomal subunit. The ribosome is a large ribonucleoprotein complex responsible for the synthesis of proteins in the cell. Part of the small subunit (SSU) processome, first precursor of the small eukaryotic ribosomal subunit. During the assembly of the SSU processome in the nucleolus, many ribosome biogenesis factors, an RNA chaperone and ribosomal proteins associate with the nascent pre-rRNA and work in concert to generate RNA folding, modifications, rearrangements and cleavage as well as targeted degradation of pre-ribosomal RNA by the RNA exosome. May play a role during erythropoiesis. The protein is Small ribosomal subunit protein eS1 (rps3a) of Salmo salar (Atlantic salmon).